The primary structure comprises 177 residues: ATP synthase subunit delta (177 aa).

Belongs to the ATPase delta chain family. F-type ATPases have 2 components, F(1) - the catalytic core - and F(0) - the membrane proton channel. F(1) has five subunits: alpha(3), beta(3), gamma(1), delta(1), epsilon(1). F(0) has three main subunits: a(1), b(2) and c(10-14). The alpha and beta chains form an alternating ring which encloses part of the gamma chain. F(1) is attached to F(0) by a central stalk formed by the gamma and epsilon chains, while a peripheral stalk is formed by the delta and b chains.

Its subcellular location is the cell inner membrane. F(1)F(0) ATP synthase produces ATP from ADP in the presence of a proton or sodium gradient. F-type ATPases consist of two structural domains, F(1) containing the extramembraneous catalytic core and F(0) containing the membrane proton channel, linked together by a central stalk and a peripheral stalk. During catalysis, ATP synthesis in the catalytic domain of F(1) is coupled via a rotary mechanism of the central stalk subunits to proton translocation. Its function is as follows. This protein is part of the stalk that links CF(0) to CF(1). It either transmits conformational changes from CF(0) to CF(1) or is implicated in proton conduction. The protein is ATP synthase subunit delta of Sodalis glossinidius (strain morsitans).